The following is a 438-amino-acid chain: 26S proteasome regulatory subunit 7 homolog (438 aa).

The span at 1–15 shows a compositional bias: basic and acidic residues; it reads MPPKEDWEKYQKPVD. The segment at 1-31 is disordered; that stretch reads MPPKEDWEKYQKPVDTEEENDKNPPPLDEGD. Position 90 is a phosphoserine (serine 90). ATP is bound at residue 220–227; the sequence is GPPGTGKT.

The protein belongs to the AAA ATPase family.

It is found in the cytoplasm. It localises to the nucleus. In terms of biological role, the 26S proteasome is involved in the ATP-dependent degradation of ubiquitinated proteins. The regulatory (or ATPase) complex confers ATP dependency and substrate specificity to the 26S complex. This Schizosaccharomyces pombe (strain 972 / ATCC 24843) (Fission yeast) protein is 26S proteasome regulatory subunit 7 homolog (rpt1).